The primary structure comprises 259 residues: 5'-nucleotidase SurE (259 aa).

4 residues coordinate a divalent metal cation: Asp-8, Asp-9, Ser-39, and Asn-98.

It belongs to the SurE nucleotidase family. It depends on a divalent metal cation as a cofactor.

It localises to the cytoplasm. The enzyme catalyses a ribonucleoside 5'-phosphate + H2O = a ribonucleoside + phosphate. In terms of biological role, nucleotidase that shows phosphatase activity on nucleoside 5'-monophosphates. The sequence is that of 5'-nucleotidase SurE from Fervidobacterium nodosum (strain ATCC 35602 / DSM 5306 / Rt17-B1).